Here is a 637-residue protein sequence, read N- to C-terminus: Chaperone protein HtpG (637 aa).

The interval 1–338 (MMELKMHNVK…SPDLPLNISR (338 aa)) is a; substrate-binding. Positions 339–558 (ETLQNNRVVE…EGAMDLRMER (220 aa)) are b. The disordered stretch occupies residues 493 to 512 (KFSPEEKDKENKSDEERAEG). Residues 559 to 637 (FLREQNQLNY…LNNLLGKVII (79 aa)) are c.

This sequence belongs to the heat shock protein 90 family. As to quaternary structure, homodimer.

Its subcellular location is the cytoplasm. Functionally, molecular chaperone. Has ATPase activity. In Wolbachia sp. subsp. Brugia malayi (strain TRS), this protein is Chaperone protein HtpG.